The following is a 367-amino-acid chain: F-box only protein 25 (367 aa).

Positions 1-83 (MPFLGQDWRS…NDTNTQSFYR (83 aa)) are interaction with beta-actin. An F-box domain is found at 226–274 (LTLSDLPLHMLNNILYRFSDGWDIITLGQVTPTLYMLSEDRQLWKKLCQ).

Part of a SCF (SKP1-cullin-F-box) protein ligase complex consisting of FBXO25, SKP1, CUL1 and RBX1. Interacts directly with SKP1 and CUL1. Interacts (via C-terminus) with beta-actin (via N-terminus). As to expression, expressed in all brain tissue observed.

It is found in the nucleus. It functions in the pathway protein modification; protein ubiquitination. Its function is as follows. Substrate-recognition component of the SCF (SKP1-CUL1-F-box protein)-type E3 ubiquitin ligase complex. May play a role in accumulation of expanded polyglutamine (polyQ) protein huntingtin (HTT). The chain is F-box only protein 25 (FBXO25) from Homo sapiens (Human).